We begin with the raw amino-acid sequence, 227 residues long: ATP-dependent dethiobiotin synthetase BioD (227 aa).

13-18 is a binding site for ATP; that stretch reads DVGKTV. Thr17 is a binding site for Mg(2+). Residue Lys38 is part of the active site. Residues Asp55, 116-119, 176-177, and 205-207 each bind ATP; these read EGAG, NR, and PYI. Mg(2+) is bound by residues Asp55 and Glu116.

This sequence belongs to the dethiobiotin synthetase family. Homodimer. Requires Mg(2+) as cofactor.

The protein resides in the cytoplasm. It carries out the reaction (7R,8S)-7,8-diammoniononanoate + CO2 + ATP = (4R,5S)-dethiobiotin + ADP + phosphate + 3 H(+). The protein operates within cofactor biosynthesis; biotin biosynthesis; biotin from 7,8-diaminononanoate: step 1/2. In terms of biological role, catalyzes a mechanistically unusual reaction, the ATP-dependent insertion of CO2 between the N7 and N8 nitrogen atoms of 7,8-diaminopelargonic acid (DAPA, also called 7,8-diammoniononanoate) to form a ureido ring. This chain is ATP-dependent dethiobiotin synthetase BioD, found in Vibrio campbellii (strain ATCC BAA-1116).